The following is a 447-amino-acid chain: Tryptophan synthase beta chain (447 aa).

Lys92 is modified (N6-(pyridoxal phosphate)lysine). Positions 408 to 447 (GLAVKGGEQPKEFSDGPPLGKLAPSGGSAVREATSVGARK) are disordered.

This sequence belongs to the TrpB family. As to quaternary structure, tetramer of two alpha and two beta chains. Requires pyridoxal 5'-phosphate as cofactor.

The catalysed reaction is (1S,2R)-1-C-(indol-3-yl)glycerol 3-phosphate + L-serine = D-glyceraldehyde 3-phosphate + L-tryptophan + H2O. It participates in amino-acid biosynthesis; L-tryptophan biosynthesis; L-tryptophan from chorismate: step 5/5. The beta subunit is responsible for the synthesis of L-tryptophan from indole and L-serine. This is Tryptophan synthase beta chain from Polaromonas sp. (strain JS666 / ATCC BAA-500).